The sequence spans 218 residues: Ras-related protein R-Ras (218 aa).

The segment at 1–30 (MSSGAASGTGRGRPRGGGPGPRDPPPGETH) is disordered. Over residues 7 to 20 (SGTGRGRPRGGGPG) the composition is skewed to gly residues. Residue 36–44 (GGGGVGKSA) participates in GTP binding. The short motif at 58-66 (YDPTIEDSY) is the Effector region element. GTP is bound by residues 83–87 (DTAGQ), 142–145 (NKAD), and 172–174 (SAK). Cysteine methyl ester is present on C215. C215 carries the S-geranylgeranyl cysteine lipid modification. A propeptide spans 216–218 (VLL) (removed in mature form).

This sequence belongs to the small GTPase superfamily. Ras family. As to quaternary structure, interacts with PLCE1. Interacts (active GTP-bound form preferentially) with RGS14. Interacts with OSBPL3. Interacts with ZDHHC19. S-palmitoylated by ZDHHC19, leading to increased association with membranes and with rafts/caveolae as well as enhanced cell viability.

The protein resides in the cell membrane. The catalysed reaction is GTP + H2O = GDP + phosphate + H(+). In terms of biological role, GTP-binding protein with GTPase activity, likely involved in the regulation of MAPK signaling pathway and thereby controlling multiple cellular processes. Regulates the organization of the actin cytoskeleton. With OSPBL3, modulates integrin beta-1 (ITGB1) activity. This is Ras-related protein R-Ras (Rras) from Mus musculus (Mouse).